A 355-amino-acid polypeptide reads, in one-letter code: S-adenosylmethionine:tRNA ribosyltransferase-isomerase (355 aa).

The protein belongs to the QueA family. Monomer.

It localises to the cytoplasm. The enzyme catalyses 7-aminomethyl-7-carbaguanosine(34) in tRNA + S-adenosyl-L-methionine = epoxyqueuosine(34) in tRNA + adenine + L-methionine + 2 H(+). It participates in tRNA modification; tRNA-queuosine biosynthesis. Transfers and isomerizes the ribose moiety from AdoMet to the 7-aminomethyl group of 7-deazaguanine (preQ1-tRNA) to give epoxyqueuosine (oQ-tRNA). This Burkholderia ambifaria (strain ATCC BAA-244 / DSM 16087 / CCUG 44356 / LMG 19182 / AMMD) (Burkholderia cepacia (strain AMMD)) protein is S-adenosylmethionine:tRNA ribosyltransferase-isomerase.